We begin with the raw amino-acid sequence, 420 residues long: Glucose-1-phosphate adenylyltransferase (420 aa).

Alpha-D-glucose 1-phosphate-binding positions include Tyr-97, Gly-162, 177-178 (EK), and Ser-188.

Belongs to the bacterial/plant glucose-1-phosphate adenylyltransferase family. Homotetramer.

It catalyses the reaction alpha-D-glucose 1-phosphate + ATP + H(+) = ADP-alpha-D-glucose + diphosphate. The protein operates within glycan biosynthesis; glycogen biosynthesis. Functionally, involved in the biosynthesis of ADP-glucose, a building block required for the elongation reactions to produce glycogen. Catalyzes the reaction between ATP and alpha-D-glucose 1-phosphate (G1P) to produce pyrophosphate and ADP-Glc. The protein is Glucose-1-phosphate adenylyltransferase of Pseudothermotoga lettingae (strain ATCC BAA-301 / DSM 14385 / NBRC 107922 / TMO) (Thermotoga lettingae).